A 45-amino-acid polypeptide reads, in one-letter code: Large ribosomal subunit protein bL34 (45 aa).

Residues Arg22–Val45 form a disordered region. Residues Lys33 to Val45 are compositionally biased toward basic residues.

It belongs to the bacterial ribosomal protein bL34 family.

The protein is Large ribosomal subunit protein bL34 of Thermosynechococcus vestitus (strain NIES-2133 / IAM M-273 / BP-1).